We begin with the raw amino-acid sequence, 210 residues long: Orotate phosphoribosyltransferase (210 aa).

5-phospho-alpha-D-ribose 1-diphosphate is bound by residues Arg96, Lys100, His102, and 122–130 (EDLISTGGS). Ser126 lines the orotate pocket.

Belongs to the purine/pyrimidine phosphoribosyltransferase family. PyrE subfamily. Homodimer. Requires Mg(2+) as cofactor.

It carries out the reaction orotidine 5'-phosphate + diphosphate = orotate + 5-phospho-alpha-D-ribose 1-diphosphate. Its pathway is pyrimidine metabolism; UMP biosynthesis via de novo pathway; UMP from orotate: step 1/2. In terms of biological role, catalyzes the transfer of a ribosyl phosphate group from 5-phosphoribose 1-diphosphate to orotate, leading to the formation of orotidine monophosphate (OMP). The protein is Orotate phosphoribosyltransferase of Streptococcus pneumoniae serotype 4 (strain ATCC BAA-334 / TIGR4).